The primary structure comprises 832 residues: tRNA ligase (832 aa).

Residue lysine 108 is the N6-AMP-lysine intermediate of the active site.

The protein belongs to the TRL1 family.

It carries out the reaction ATP + (ribonucleotide)n-3'-hydroxyl + 5'-phospho-(ribonucleotide)m = (ribonucleotide)n+m + AMP + diphosphate.. Functionally, one of the two proteins required for the splicing of precursor tRNA molecules containing introns. The ligation activity requires three enzymatic activities: phosphorylation of the 5' terminus of the 3' half-tRNA in the presence of ATP, opening of the 2'3'-cyclic phosphodiester bond of the 5' half-tRNA leaving a 2'-phosphomonoester and ligation of the two tRNA halves in an ATP-dependent reaction. This chain is tRNA ligase (LIG1), found in Candida albicans (strain SC5314 / ATCC MYA-2876) (Yeast).